The following is a 460-amino-acid chain: GTPase Der (460 aa).

EngA-type G domains lie at 2–164 (QSII…HEEF) and 196–368 (IRVG…ENFT). GTP is bound by residues 8–15 (GKPNVGKS), 55–59 (DSGGL), 116–119 (NKVD), 202–209 (GRVNVGKS), 249–253 (DTAGI), and 313–316 (NKWD). The 85-residue stretch at 369–453 (QKIQTSKLNT…PLVIASRKKG (85 aa)) folds into the KH-like domain.

It belongs to the TRAFAC class TrmE-Era-EngA-EngB-Septin-like GTPase superfamily. EngA (Der) GTPase family. As to quaternary structure, associates with the 50S ribosomal subunit.

Functionally, GTPase that plays an essential role in the late steps of ribosome biogenesis. The protein is GTPase Der of Campylobacter jejuni subsp. jejuni serotype O:6 (strain 81116 / NCTC 11828).